The primary structure comprises 158 residues: UPAR/Ly6 domain-containing protein crim (158 aa).

An N-terminal signal peptide occupies residues 1–22 (MHYHTNLIAALLLAALIHEGSA). The Extracellular segment spans residues 23–136 (IWCYRCTSAT…FCFLDHRCNG (114 aa)). An N-linked (GlcNAc...) asparagine glycan is attached at Asn-107. Asn-135 carries GPI-anchor amidated asparagine lipidation. Residues 136 to 158 (GASGLQTSAVIGLLTLIPALLLR) constitute a propeptide, removed in mature form. The chain crosses the membrane as a helical span at residues 137–157 (ASGLQTSAVIGLLTLIPALLL). Arg-158 is a topological domain (cytoplasmic).

It belongs to the quiver family.

The protein localises to the membrane. In terms of biological role, required for septate junction assembly possibly by organizing the preassembly and transport of septate junction proteins. Involved in epithelial cell septate junction-mediated paracellular barrier functions of trachea, hindgut and salivary gland. The polypeptide is UPAR/Ly6 domain-containing protein crim (Drosophila melanogaster (Fruit fly)).